A 642-amino-acid chain; its full sequence is Threonine--tRNA ligase (642 aa).

A TGS domain is found at 1–61 (MPIITLPDGS…SEDANLEIIT (61 aa)). A catalytic region spans residues 243-534 (DHRKIGKALN…ITEEYAGFFP (292 aa)). 3 residues coordinate Zn(2+): Cys-334, His-385, and His-511.

This sequence belongs to the class-II aminoacyl-tRNA synthetase family. In terms of assembly, homodimer. Requires Zn(2+) as cofactor.

It localises to the cytoplasm. The enzyme catalyses tRNA(Thr) + L-threonine + ATP = L-threonyl-tRNA(Thr) + AMP + diphosphate + H(+). Functionally, catalyzes the attachment of threonine to tRNA(Thr) in a two-step reaction: L-threonine is first activated by ATP to form Thr-AMP and then transferred to the acceptor end of tRNA(Thr). Also edits incorrectly charged L-seryl-tRNA(Thr). The sequence is that of Threonine--tRNA ligase from Histophilus somni (strain 2336) (Haemophilus somnus).